Reading from the N-terminus, the 375-residue chain is Queuine tRNA-ribosyltransferase (375 aa).

Asp-89 acts as the Proton acceptor in catalysis. Residues 89-93 (DSGGF), Asp-143, Gln-187, and Gly-214 contribute to the substrate site. The RNA binding stretch occupies residues 245–251 (GVGKPED). Asp-264 (nucleophile) is an active-site residue. The RNA binding; important for wobble base 34 recognition stretch occupies residues 269–273 (TRNAR). Residues Cys-302, Cys-304, Cys-307, and His-333 each coordinate Zn(2+).

This sequence belongs to the queuine tRNA-ribosyltransferase family. In terms of assembly, homodimer. Within each dimer, one monomer is responsible for RNA recognition and catalysis, while the other monomer binds to the replacement base PreQ1. The cofactor is Zn(2+).

The enzyme catalyses 7-aminomethyl-7-carbaguanine + guanosine(34) in tRNA = 7-aminomethyl-7-carbaguanosine(34) in tRNA + guanine. It participates in tRNA modification; tRNA-queuosine biosynthesis. Its function is as follows. Catalyzes the base-exchange of a guanine (G) residue with the queuine precursor 7-aminomethyl-7-deazaguanine (PreQ1) at position 34 (anticodon wobble position) in tRNAs with GU(N) anticodons (tRNA-Asp, -Asn, -His and -Tyr). Catalysis occurs through a double-displacement mechanism. The nucleophile active site attacks the C1' of nucleotide 34 to detach the guanine base from the RNA, forming a covalent enzyme-RNA intermediate. The proton acceptor active site deprotonates the incoming PreQ1, allowing a nucleophilic attack on the C1' of the ribose to form the product. After dissociation, two additional enzymatic reactions on the tRNA convert PreQ1 to queuine (Q), resulting in the hypermodified nucleoside queuosine (7-(((4,5-cis-dihydroxy-2-cyclopenten-1-yl)amino)methyl)-7-deazaguanosine). The polypeptide is Queuine tRNA-ribosyltransferase (Shigella flexneri serotype 5b (strain 8401)).